The sequence spans 302 residues: Protoheme IX farnesyltransferase (302 aa).

The next 9 membrane-spanning stretches (helical) occupy residues 28–48 (LALL…SLDP), 50–70 (MLAL…AFNM), 93–115 (LNPY…SAAA), 119–138 (YVAL…YTQL), 147–167 (IIFG…AAAG), 172–192 (GGVL…WFLG), 219–239 (LIAV…LYYG), 242–262 (FLTA…IGGF), and 271–291 (ALKL…ILPL).

It belongs to the UbiA prenyltransferase family. Protoheme IX farnesyltransferase subfamily.

The protein resides in the cell membrane. It carries out the reaction heme b + (2E,6E)-farnesyl diphosphate + H2O = Fe(II)-heme o + diphosphate. It functions in the pathway porphyrin-containing compound metabolism; heme O biosynthesis; heme O from protoheme: step 1/1. In terms of biological role, converts heme B (protoheme IX) to heme O by substitution of the vinyl group on carbon 2 of heme B porphyrin ring with a hydroxyethyl farnesyl side group. The polypeptide is Protoheme IX farnesyltransferase (Aeropyrum pernix (strain ATCC 700893 / DSM 11879 / JCM 9820 / NBRC 100138 / K1)).